Consider the following 63-residue polypeptide: Prokaryotic ubiquitin-like protein UBact (63 aa).

The segment at M1–E63 is disordered. The segment covering P17–D50 has biased composition (basic and acidic residues). E63 participates in a covalent cross-link: Isoglutamyl lysine isopeptide (Glu-Lys) (interchain with K-? in acceptor proteins).

Belongs to the ubiquitin-like protein UBact family.

In terms of biological role, may function as a protein modifier covalently attached to lysine residues of substrate proteins. This may serve to target the modified proteins for degradation by proteasomes. The sequence is that of Prokaryotic ubiquitin-like protein UBact from Handelsmanbacteria sp. (strain RIFCSPLOWO2_12_FULL_64_10).